Here is a 282-residue protein sequence, read N- to C-terminus: NAD(P)H-hydrate epimerase (282 aa).

Residues M1 to Y53 constitute a mitochondrion transit peptide. Phosphoserine; by PKA is present on S43. A YjeF N-terminal domain is found at A59 to L269. N113–D117 provides a ligand contact to (6S)-NADPHX. N114 is a binding site for K(+). At K138 the chain carries N6-succinyllysine. Residue D179 participates in K(+) binding. Residues G183–D189 and D212 contribute to the (6S)-NADPHX site. A K(+)-binding site is contributed by S215.

This sequence belongs to the NnrE/AIBP family. In terms of assembly, homodimer. Interacts with APOA1 and APOA2. K(+) serves as cofactor. Post-translationally, undergoes physiological phosphorylation during sperm capacitation, downstream to PKA activation. As to expression, detected in testis and sperm (at protein level). Expressed at high levels in heart, liver, kidney, and testis.

The protein resides in the mitochondrion. It is found in the secreted. The catalysed reaction is (6R)-NADHX = (6S)-NADHX. It catalyses the reaction (6R)-NADPHX = (6S)-NADPHX. In terms of biological role, catalyzes the epimerization of the S- and R-forms of NAD(P)HX, a damaged form of NAD(P)H that is a result of enzymatic or heat-dependent hydration. This is a prerequisite for the S-specific NAD(P)H-hydrate dehydratase to allow the repair of both epimers of NAD(P)HX. Accelerates cholesterol efflux from endothelial cells to high-density lipoprotein (HDL) and thereby regulates angiogenesis. This is NAD(P)H-hydrate epimerase from Mus musculus (Mouse).